The following is a 218-amino-acid chain: Large ribosomal subunit protein mL54 (218 aa).

The protein belongs to the mitochondrion-specific ribosomal protein mL54 family. In terms of assembly, component of the mitochondrial large ribosomal subunit (mt-LSU). Mature N.crassa 74S mitochondrial ribosomes consist of a small (37S) and a large (54S) subunit. The 37S small subunit contains a 16S ribosomal RNA (16S mt-rRNA) and 32 different proteins. The 54S large subunit contains a 23S rRNA (23S mt-rRNA) and 42 different proteins.

It localises to the mitochondrion. Its function is as follows. Component of the mitochondrial ribosome (mitoribosome), a dedicated translation machinery responsible for the synthesis of mitochondrial genome-encoded proteins, including at least some of the essential transmembrane subunits of the mitochondrial respiratory chain. The mitoribosomes are attached to the mitochondrial inner membrane and translation products are cotranslationally integrated into the membrane. The polypeptide is Large ribosomal subunit protein mL54 (mrpl37) (Neurospora crassa (strain ATCC 24698 / 74-OR23-1A / CBS 708.71 / DSM 1257 / FGSC 987)).